Consider the following 426-residue polypeptide: Histidine--tRNA ligase (426 aa).

This sequence belongs to the class-II aminoacyl-tRNA synthetase family. Homodimer.

Its subcellular location is the cytoplasm. The enzyme catalyses tRNA(His) + L-histidine + ATP = L-histidyl-tRNA(His) + AMP + diphosphate + H(+). In Pseudoalteromonas atlantica (strain T6c / ATCC BAA-1087), this protein is Histidine--tRNA ligase.